Here is a 782-residue protein sequence, read N- to C-terminus: Phosphoribosylformylglycinamidine synthase subunit PurL (782 aa).

His50 is a catalytic residue. ATP-binding residues include Tyr53 and Lys92. Glu94 contacts Mg(2+). Substrate contacts are provided by residues Ser95–His98 and Arg117. The active-site Proton acceptor is His96. Asp118 contacts Mg(2+). Gln241 contributes to the substrate binding site. Asp269 contacts Mg(2+). Glu313–Gln315 lines the substrate pocket. Positions 520 and 557 each coordinate ATP. Residue Asn558 participates in Mg(2+) binding. Ser560 serves as a coordination point for substrate.

Belongs to the FGAMS family. In terms of assembly, monomer. Part of the FGAM synthase complex composed of 1 PurL, 1 PurQ and 2 PurS subunits.

It localises to the cytoplasm. It carries out the reaction N(2)-formyl-N(1)-(5-phospho-beta-D-ribosyl)glycinamide + L-glutamine + ATP + H2O = 2-formamido-N(1)-(5-O-phospho-beta-D-ribosyl)acetamidine + L-glutamate + ADP + phosphate + H(+). Its pathway is purine metabolism; IMP biosynthesis via de novo pathway; 5-amino-1-(5-phospho-D-ribosyl)imidazole from N(2)-formyl-N(1)-(5-phospho-D-ribosyl)glycinamide: step 1/2. In terms of biological role, part of the phosphoribosylformylglycinamidine synthase complex involved in the purines biosynthetic pathway. Catalyzes the ATP-dependent conversion of formylglycinamide ribonucleotide (FGAR) and glutamine to yield formylglycinamidine ribonucleotide (FGAM) and glutamate. The FGAM synthase complex is composed of three subunits. PurQ produces an ammonia molecule by converting glutamine to glutamate. PurL transfers the ammonia molecule to FGAR to form FGAM in an ATP-dependent manner. PurS interacts with PurQ and PurL and is thought to assist in the transfer of the ammonia molecule from PurQ to PurL. The protein is Phosphoribosylformylglycinamidine synthase subunit PurL of Cyanothece sp. (strain PCC 7425 / ATCC 29141).